Here is a 520-residue protein sequence, read N- to C-terminus: Cholesterol side-chain cleavage enzyme, mitochondrial (520 aa).

The N-terminal 39 residues, 1–39 (MLARGLALRSVLVKGCQPFLSAPRECPGHPRVGTGEGAC), are a transit peptide targeting the mitochondrion. Cys461 is a heme binding site.

Belongs to the cytochrome P450 family. Interacts with FDX1/adrenodoxin. It depends on heme as a cofactor.

The protein localises to the mitochondrion inner membrane. It catalyses the reaction 6 reduced [adrenodoxin] + cholesterol + 3 O2 + 6 H(+) = 4-methylpentanal + pregnenolone + 6 oxidized [adrenodoxin] + 4 H2O. It carries out the reaction 2 reduced [adrenodoxin] + cholesterol + O2 + 2 H(+) = (22R)-hydroxycholesterol + 2 oxidized [adrenodoxin] + H2O. The enzyme catalyses (22R)-hydroxycholesterol + 2 reduced [adrenodoxin] + O2 + 2 H(+) = (20R,22R)-20,22-dihydroxycholesterol + 2 oxidized [adrenodoxin] + H2O. The catalysed reaction is (20R,22R)-20,22-dihydroxycholesterol + 2 reduced [adrenodoxin] + O2 + 2 H(+) = 4-methylpentanal + pregnenolone + 2 oxidized [adrenodoxin] + 2 H2O. It participates in lipid metabolism; C21-steroid hormone metabolism. The protein operates within steroid metabolism; cholesterol metabolism. In terms of biological role, a cytochrome P450 monooxygenase that catalyzes the side-chain hydroxylation and cleavage of cholesterol to pregnenolone, the precursor of most steroid hormones. Catalyzes three sequential oxidation reactions of cholesterol, namely the hydroxylation at C22 followed with the hydroxylation at C20 to yield 20R,22R-hydroxycholesterol that is further cleaved between C20 and C22 to yield the C21-steroid pregnenolone and 4-methylpentanal. Mechanistically, uses molecular oxygen inserting one oxygen atom into a substrate and reducing the second into a water molecule. Two electrons are provided by NADPH via a two-protein mitochondrial transfer system comprising flavoprotein FDXR (adrenodoxin/ferredoxin reductase) and nonheme iron-sulfur protein FDX1 or FDX2 (adrenodoxin/ferredoxin). In Sus scrofa (Pig), this protein is Cholesterol side-chain cleavage enzyme, mitochondrial (CYP11A1).